The primary structure comprises 100 residues: Large ribosomal subunit protein bL21 (100 aa).

Belongs to the bacterial ribosomal protein bL21 family. In terms of assembly, part of the 50S ribosomal subunit. Contacts protein L20.

Its function is as follows. This protein binds to 23S rRNA in the presence of protein L20. The protein is Large ribosomal subunit protein bL21 of Ureaplasma parvum serovar 3 (strain ATCC 27815 / 27 / NCTC 11736).